The sequence spans 620 residues: Chaperone protein DnaK (620 aa).

The segment at 579 to 620 (KAQKEASAGAEASEDASGPSSTGSASDDDVVDADYEVVDEDK) is disordered. Low complexity predominate over residues 583 to 603 (EASAGAEASEDASGPSSTGSA). Residues 604 to 620 (SDDDVVDADYEVVDEDK) are compositionally biased toward acidic residues.

Belongs to the heat shock protein 70 family.

In terms of biological role, acts as a chaperone. This Methanococcoides burtonii (strain DSM 6242 / NBRC 107633 / OCM 468 / ACE-M) protein is Chaperone protein DnaK.